The primary structure comprises 170 residues: MQYTGSQYFGEYINGRMEGSAEYILPTDTRYIGEMKDGMFHGEGTLFFPSGSRFDAIWKKGLVVKGKYTFNDGLQYEDKHWHYCDSYDRRFYTEICYGLKPSGISQLTNMDPPRRIPLGYYDCGDGFYNPTTRVIKDYRNRFLRNADDDEHEWIVRTCRKGWLPMPKQKS.

MORN repeat units follow at residues 8-30 (YFGEYINGRMEGSAEYILPTDTR), 31-53 (YIGEMKDGMFHGEGTLFFPSGSR), and 54-75 (FDAIWKKGLVVKGKYTFNDGLQ).

As to expression, only detected in testis (at protein level).

It is found in the cell projection. Its subcellular location is the cilium. It localises to the flagellum. This is MORN repeat-containing protein 5 (Morn5) from Mus musculus (Mouse).